Consider the following 189-residue polypeptide: Chitin synthase 3 (189 aa).

The protein belongs to the chitin synthase family. Class II subfamily.

It localises to the cell membrane. The catalysed reaction is [(1-&gt;4)-N-acetyl-beta-D-glucosaminyl](n) + UDP-N-acetyl-alpha-D-glucosamine = [(1-&gt;4)-N-acetyl-beta-D-glucosaminyl](n+1) + UDP + H(+). Functionally, polymerizes chitin, a structural polymer of the cell wall and septum, by transferring the sugar moiety of UDP-GlcNAc to the non-reducing end of the growing chitin polymer. The protein is Chitin synthase 3 (CHS3) of Ajellomyces capsulatus (Darling's disease fungus).